The chain runs to 352 residues: Holliday junction branch migration complex subunit RuvB (352 aa).

Residues 5–191 (TDDFSEQRVI…FGIVARLEFY (187 aa)) are large ATPase domain (RuvB-L). Residues Leu-30, Arg-31, Gly-72, Lys-75, Thr-76, Thr-77, 138–140 (EDY), Arg-181, Tyr-191, and Arg-228 each bind ATP. Thr-76 contacts Mg(2+). The small ATPAse domain (RuvB-S) stretch occupies residues 192–262 (TPLELTRIVT…MADAALVMLD (71 aa)). Positions 265–352 (PVGFDVMDRK…GPNGELWGGQ (88 aa)) are head domain (RuvB-H). DNA contacts are provided by Arg-301, Arg-320, and Arg-325.

This sequence belongs to the RuvB family. In terms of assembly, homohexamer. Forms an RuvA(8)-RuvB(12)-Holliday junction (HJ) complex. HJ DNA is sandwiched between 2 RuvA tetramers; dsDNA enters through RuvA and exits via RuvB. An RuvB hexamer assembles on each DNA strand where it exits the tetramer. Each RuvB hexamer is contacted by two RuvA subunits (via domain III) on 2 adjacent RuvB subunits; this complex drives branch migration. In the full resolvosome a probable DNA-RuvA(4)-RuvB(12)-RuvC(2) complex forms which resolves the HJ.

Its subcellular location is the cytoplasm. The catalysed reaction is ATP + H2O = ADP + phosphate + H(+). In terms of biological role, the RuvA-RuvB-RuvC complex processes Holliday junction (HJ) DNA during genetic recombination and DNA repair, while the RuvA-RuvB complex plays an important role in the rescue of blocked DNA replication forks via replication fork reversal (RFR). RuvA specifically binds to HJ cruciform DNA, conferring on it an open structure. The RuvB hexamer acts as an ATP-dependent pump, pulling dsDNA into and through the RuvAB complex. RuvB forms 2 homohexamers on either side of HJ DNA bound by 1 or 2 RuvA tetramers; 4 subunits per hexamer contact DNA at a time. Coordinated motions by a converter formed by DNA-disengaged RuvB subunits stimulates ATP hydrolysis and nucleotide exchange. Immobilization of the converter enables RuvB to convert the ATP-contained energy into a lever motion, pulling 2 nucleotides of DNA out of the RuvA tetramer per ATP hydrolyzed, thus driving DNA branch migration. The RuvB motors rotate together with the DNA substrate, which together with the progressing nucleotide cycle form the mechanistic basis for DNA recombination by continuous HJ branch migration. Branch migration allows RuvC to scan DNA until it finds its consensus sequence, where it cleaves and resolves cruciform DNA. This is Holliday junction branch migration complex subunit RuvB from Herminiimonas arsenicoxydans.